The sequence spans 167 residues: Phosphopantetheine adenylyltransferase (167 aa).

Ser9 contacts substrate. ATP-binding positions include 9-10 and His17; that span reads SF. The substrate site is built by Lys41, Val78, and Arg92. ATP contacts are provided by residues 93-95, Glu103, and 128-134; these read GLR and SRPITAT.

The protein belongs to the bacterial CoaD family. In terms of assembly, homohexamer. It depends on Mg(2+) as a cofactor.

The protein localises to the cytoplasm. It catalyses the reaction (R)-4'-phosphopantetheine + ATP + H(+) = 3'-dephospho-CoA + diphosphate. The protein operates within cofactor biosynthesis; coenzyme A biosynthesis; CoA from (R)-pantothenate: step 4/5. Its function is as follows. Reversibly transfers an adenylyl group from ATP to 4'-phosphopantetheine, yielding dephospho-CoA (dPCoA) and pyrophosphate. The sequence is that of Phosphopantetheine adenylyltransferase from Rhizobium rhizogenes (strain K84 / ATCC BAA-868) (Agrobacterium radiobacter).